Reading from the N-terminus, the 94-residue chain is Large ribosomal subunit protein uL23 (94 aa).

The protein belongs to the universal ribosomal protein uL23 family. As to quaternary structure, part of the 50S ribosomal subunit. Contacts protein L29, and trigger factor when it is bound to the ribosome.

Its function is as follows. One of the early assembly proteins it binds 23S rRNA. One of the proteins that surrounds the polypeptide exit tunnel on the outside of the ribosome. Forms the main docking site for trigger factor binding to the ribosome. The protein is Large ribosomal subunit protein uL23 of Symbiobacterium thermophilum (strain DSM 24528 / JCM 14929 / IAM 14863 / T).